A 76-amino-acid polypeptide reads, in one-letter code: Heat shock factor-binding protein 1 (76 aa).

The protein belongs to the HSBP1 family. Homohexamer. Associates with heptad repeats of HSF1 trimers and probably also HSF1 monomers, and with HSP70. Association with HSF1 trimers and HSP70 coincides with attenuation of heat shock response and the conversion of HSF1 trimer to monomer.

Its subcellular location is the nucleus. Functionally, negative regulator of the heat shock response. Negatively affects HSF1 DNA-binding activity. May have a role in the suppression of the activation of the stress response during the aging process. The protein is Heat shock factor-binding protein 1 (HSBP1) of Homo sapiens (Human).